A 242-amino-acid polypeptide reads, in one-letter code: Synaptonemal complex central element protein 1-like (242 aa).

Residues 1–24 (MAGKLKPLNVEAPEATEEAEGQAK) are disordered. Positions 44-181 (LEPQIEDLIS…LREVERRLHS (138 aa)) form a coiled coil. Residues 206–242 (VRSAPEVGAGEGEAGPELPRARDEEDPEPPVAAPDAL) are disordered.

Belongs to the SYCE family.

Functionally, may be involved in meiosis. This chain is Synaptonemal complex central element protein 1-like (SYCE1L), found in Homo sapiens (Human).